Here is a 177-residue protein sequence, read N- to C-terminus: Large ribosomal subunit protein uL6 (177 aa).

It belongs to the universal ribosomal protein uL6 family. In terms of assembly, part of the 50S ribosomal subunit.

In terms of biological role, this protein binds to the 23S rRNA, and is important in its secondary structure. It is located near the subunit interface in the base of the L7/L12 stalk, and near the tRNA binding site of the peptidyltransferase center. The protein is Large ribosomal subunit protein uL6 of Chelativorans sp. (strain BNC1).